A 417-amino-acid chain; its full sequence is Aminoacyltransferase FemB (417 aa).

This sequence belongs to the FemABX family.

It localises to the cytoplasm. The enzyme catalyses MurNAc-L-Ala-D-isoglutaminyl-L-Lys-(N(6)-tri-Gly)-D-Ala-D-Ala-diphospho-di-trans,octa-cis-undecaprenyl-GlcNAc + 2 glycyl-tRNA(Gly) = MurNAc-L-Ala-D-isoglutaminyl-L-Lys-(N(6)-penta-Gly)-D-Ala-D-Ala-diphospho-di-trans,octa-cis-undecaprenyl-GlcNAc + 2 tRNA(Gly) + 2 H(+). Functionally, catalyzes the incorporation of amino acid(s) into the interchain peptide bridge of peptidoglycan, using aminoacyl-tRNA as amino acid donor. In Staphylococcus epidermidis, this protein is Aminoacyltransferase FemB (femB).